Consider the following 114-residue polypeptide: Secretoglobin family 2B member 2 (114 aa).

A signal peptide spans 1-23 (MKGTLLLLALLVTGELGFQRTEA).

It belongs to the secretoglobin family. In terms of tissue distribution, expressed in lacrimal gland.

The protein localises to the secreted. This Mus musculus (Mouse) protein is Secretoglobin family 2B member 2 (Scgb2b2).